The primary structure comprises 41 residues: Photosystem II reaction center protein Y (41 aa).

Met1 is subject to N-formylmethionine. Residues 1–4 (MDWR) lie on the Lumenal side of the membrane. The helical transmembrane segment at 5-23 (VLVVLLPVLLAAGWAVRNI) threads the bilayer. Topologically, residues 24–41 (LPYAVKQVQKLLQKAKAA) are cytoplasmic.

It belongs to the PsbY family. In terms of assembly, PSII is composed of 1 copy each of membrane proteins PsbA, PsbB, PsbC, PsbD, PsbE, PsbF, PsbH, PsbI, PsbJ, PsbK, PsbL, PsbM, PsbT, PsbX, PsbY, PsbZ, Psb30/Ycf12, peripheral proteins PsbO, CyanoQ (PsbQ), PsbU, PsbV and a large number of cofactors. It forms dimeric complexes. This protein is only loosely associated with PSII, and is not often found in crystals. Found on the exterior of the PSII dimer, near cytochrome b559 (psbE and psbF). The cofactor is PSII binds multiple chlorophylls, carotenoids and specific lipids..

The protein localises to the cellular thylakoid membrane. Functionally, loosely associated component of the core of photosystem II, it is not always seen in crystals. PSII is a light-driven water plastoquinone oxidoreductase, using light energy to abstract electrons from H(2)O, generating a proton gradient subsequently used for ATP formation. The protein is Photosystem II reaction center protein Y of Thermosynechococcus vestitus (strain NIES-2133 / IAM M-273 / BP-1).